A 488-amino-acid chain; its full sequence is Proline--tRNA ligase (488 aa).

This sequence belongs to the class-II aminoacyl-tRNA synthetase family. ProS type 3 subfamily. In terms of assembly, homodimer.

Its subcellular location is the cytoplasm. It carries out the reaction tRNA(Pro) + L-proline + ATP = L-prolyl-tRNA(Pro) + AMP + diphosphate. In terms of biological role, catalyzes the attachment of proline to tRNA(Pro) in a two-step reaction: proline is first activated by ATP to form Pro-AMP and then transferred to the acceptor end of tRNA(Pro). Can inadvertently accommodate and process cysteine. The polypeptide is Proline--tRNA ligase (proS) (Borreliella burgdorferi (strain ATCC 35210 / DSM 4680 / CIP 102532 / B31) (Borrelia burgdorferi)).